The following is a 151-amino-acid chain: Small ribosomal subunit protein uS9 (151 aa).

It belongs to the universal ribosomal protein uS9 family.

The protein is Small ribosomal subunit protein uS9 (rps9) of Aeropyrum pernix (strain ATCC 700893 / DSM 11879 / JCM 9820 / NBRC 100138 / K1).